Consider the following 429-residue polypeptide: Ribosomal RNA small subunit methyltransferase B (429 aa).

Residues 254-260 (CAAPGGK), aspartate 277, aspartate 303, and aspartate 322 each bind S-adenosyl-L-methionine. Cysteine 375 serves as the catalytic Nucleophile.

This sequence belongs to the class I-like SAM-binding methyltransferase superfamily. RsmB/NOP family.

Its subcellular location is the cytoplasm. The enzyme catalyses cytidine(967) in 16S rRNA + S-adenosyl-L-methionine = 5-methylcytidine(967) in 16S rRNA + S-adenosyl-L-homocysteine + H(+). Specifically methylates the cytosine at position 967 (m5C967) of 16S rRNA. The sequence is that of Ribosomal RNA small subunit methyltransferase B from Escherichia coli O127:H6 (strain E2348/69 / EPEC).